A 1582-amino-acid polypeptide reads, in one-letter code: Alpha-2-macroglobulin (1582 aa).

The first 15 residues, 1-15 (MICLAALAVAVPARA), serve as a signal peptide directing secretion. Residues 1080–1083 (CAEQ) constitute a cross-link (isoglutamyl cysteine thioester (Cys-Gln)).

The protein belongs to the protease inhibitor I39 (alpha-2-macroglobulin) family. Bacterial alpha-2-macroglobulin subfamily.

In terms of biological role, protects the bacterial cell from host peptidases. The polypeptide is Alpha-2-macroglobulin (Ralstonia nicotianae (strain ATCC BAA-1114 / GMI1000) (Ralstonia solanacearum)).